We begin with the raw amino-acid sequence, 1368 residues long: DNA-directed RNA polymerase subunit beta (1368 aa).

This sequence belongs to the RNA polymerase beta chain family. In terms of assembly, the RNAP catalytic core consists of 2 alpha, 1 beta, 1 beta' and 1 omega subunit. When a sigma factor is associated with the core the holoenzyme is formed, which can initiate transcription.

The enzyme catalyses RNA(n) + a ribonucleoside 5'-triphosphate = RNA(n+1) + diphosphate. DNA-dependent RNA polymerase catalyzes the transcription of DNA into RNA using the four ribonucleoside triphosphates as substrates. In Burkholderia ambifaria (strain ATCC BAA-244 / DSM 16087 / CCUG 44356 / LMG 19182 / AMMD) (Burkholderia cepacia (strain AMMD)), this protein is DNA-directed RNA polymerase subunit beta.